The following is an 860-amino-acid chain: Leucine--tRNA ligase (860 aa).

Positions Pro-42–His-52 match the 'HIGH' region motif. The 'KMSKS' region signature appears at Lys-619–Ser-623. Lys-622 serves as a coordination point for ATP.

The protein belongs to the class-I aminoacyl-tRNA synthetase family.

The protein resides in the cytoplasm. It carries out the reaction tRNA(Leu) + L-leucine + ATP = L-leucyl-tRNA(Leu) + AMP + diphosphate. The polypeptide is Leucine--tRNA ligase (Escherichia coli O127:H6 (strain E2348/69 / EPEC)).